The primary structure comprises 74 residues: Conotoxin TsMLCL-04 (74 aa).

The signal sequence occupies residues 1 to 19; it reads MLCLPVFIILLLLASPAAP. Residues 20 to 60 constitute a propeptide that is removed on maturation; it reads NPLETRIQRDLIRAALEDADMKTNERFLEGVISTIKDFAGK.

This sequence belongs to the conotoxin T superfamily. Contains 2 disulfide bonds that can be either 'C1-C3, C2-C4' or 'C1-C4, C2-C3', since these disulfide connectivities have been observed for conotoxins with cysteine framework V (for examples, see AC P0DQQ7 and AC P81755). In terms of tissue distribution, expressed by the venom duct.

It is found in the secreted. The polypeptide is Conotoxin TsMLCL-04 (Conus tessulatus (Tessellate cone)).